We begin with the raw amino-acid sequence, 341 residues long: Heterogeneous nuclear ribonucleoproteins A2/B1 (341 aa).

2 consecutive RRM domains span residues 9-92 and 100-179; these read RKLF…ESGK and KKLF…LSRQ. Residue lysine 10 forms a Glycyl lysine isopeptide (Lys-Gly) (interchain with G-Cter in SUMO2) linkage. Residue serine 17 is modified to Phosphoserine. Arginine 26 carries the post-translational modification Omega-N-methylarginine. The residue at position 73 (serine 73) is a Phosphoserine. At lysine 92 the chain carries N6,N6-dimethyllysine; alternate. Lysine 92 participates in a covalent cross-link: Glycyl lysine isopeptide (Lys-Gly) (interchain with G-Cter in SUMO2); alternate. Residues lysine 100, lysine 108, and lysine 125 each participate in a glycyl lysine isopeptide (Lys-Gly) (interchain with G-Cter in SUMO2) cross-link. At threonine 128 the chain carries Phosphothreonine. Position 137 is a phosphoserine (serine 137). A Glycyl lysine isopeptide (Lys-Gly) (interchain with G-Cter in SUMO2) cross-link involves residue lysine 140. Position 147 is a phosphothreonine (threonine 147). Residues lysine 156 and lysine 161 each participate in a glycyl lysine isopeptide (Lys-Gly) (interchain with G-Cter in SUMO2); alternate cross-link. 2 positions are modified to N6-acetyllysine; alternate: lysine 156 and lysine 161. Phosphothreonine is present on threonine 164. Lysine 174 participates in a covalent cross-link: Glycyl lysine isopeptide (Lys-Gly) (interchain with G-Cter in SUMO2). Phosphoserine is present on residues serine 177 and serine 189. The disordered stretch occupies residues 181 to 341; it reads MQEVQSSRSG…SGGYGGRSRY (161 aa). The segment covering 190-211 has biased composition (gly residues); it reads GRGGNFGFGDSRGGGGNFGPGP. Arginine 191 bears the Asymmetric dimethylarginine; alternate mark. Position 191 is a dimethylated arginine; alternate (arginine 191). Position 191 is an omega-N-methylarginine; alternate (arginine 191). Phosphoserine is present on serine 200. Arginine 201 carries the asymmetric dimethylarginine; alternate modification. Dimethylated arginine; alternate is present on arginine 201. Arginine 201 carries the post-translational modification Omega-N-methylarginine; alternate. Position 213 is a phosphoserine (serine 213). Arginine 216 is modified (omega-N-methylarginine). 2 positions are modified to phosphoserine: serine 219 and serine 224. Residue arginine 226 is modified to Omega-N-methylarginine. Position 247 is a phosphoserine (serine 247). Arginine 254 is modified (asymmetric dimethylarginine; alternate). The residue at position 254 (arginine 254) is an Omega-N-methylarginine; alternate. Positions 296–335 are nuclear targeting sequence; that stretch reads QQPSNYGPMKSGNFGGSRNMGGPYGGGNYGPGGSGGSGGY. Residues 308 to 341 show a composition bias toward gly residues; sequence NFGGSRNMGGPYGGGNYGPGGSGGSGGYGGRSRY. A Phosphoserine modification is found at serine 312. An Omega-N-methylarginine modification is found at arginine 313. Tyrosine 319 is modified (phosphotyrosine). Phosphoserine is present on residues serine 329 and serine 332. Residue tyrosine 335 is modified to Phosphotyrosine. An Omega-N-methylarginine modification is found at arginine 338.

In terms of assembly, identified in the spliceosome C complex. Identified in a IGF2BP1-dependent mRNP granule complex containing untranslated mRNAs. Interacts with IGF2BP1. Interacts with C9orf72. Interacts with DGCR8. Interacts with TARDBP. Interacts with CKAP5. Interacts with PPIA/CYPA. Interacts (via C-terminus) with FAM76B; the interaction results in retention of HNRNPA2B1 in the nucleus and inhibition of the NF-kappa-B-mediated inflammatory pathway. Interacts with NF-kappa-B inhibitors NFKBIA and NFKBIE; the interaction may be mediated by the RRM2 domain of HNRNPA2B1, and HNRNPA2B1 may interact simultaneously with FAM76B and either NFKBIA or NFKBIE to form a complex. Sumoylated in exosomes, promoting miRNAs-binding. In terms of processing, asymmetric dimethylation at Arg-254 constitutes the major methylation site. According to a report, methylation affects subcellular location and promotes nuclear localization. According to another report, methylation at Arg-254 does not influence nucleocytoplasmic shuttling.

It is found in the nucleus. Its subcellular location is the nucleoplasm. It localises to the cytoplasmic granule. The protein resides in the secreted. The protein localises to the extracellular exosome. Its function is as follows. Heterogeneous nuclear ribonucleoprotein (hnRNP) that associates with nascent pre-mRNAs, packaging them into hnRNP particles. The hnRNP particle arrangement on nascent hnRNA is non-random and sequence-dependent and serves to condense and stabilize the transcripts and minimize tangling and knotting. Packaging plays a role in various processes such as transcription, pre-mRNA processing, RNA nuclear export, subcellular location, mRNA translation and stability of mature mRNAs. Forms hnRNP particles with at least 20 other different hnRNP and heterogeneous nuclear RNA in the nucleus. Involved in transport of specific mRNAs to the cytoplasm in oligodendrocytes and neurons: acts by specifically recognizing and binding the A2RE (21 nucleotide hnRNP A2 response element) or the A2RE11 (derivative 11 nucleotide oligonucleotide) sequence motifs present on some mRNAs, and promotes their transport to the cytoplasm. Specifically binds single-stranded telomeric DNA sequences, protecting telomeric DNA repeat against endonuclease digestion. Also binds other RNA molecules, such as primary miRNA (pri-miRNAs): acts as a nuclear 'reader' of the N6-methyladenosine (m6A) mark by specifically recognizing and binding a subset of nuclear m6A-containing pri-miRNAs. Binding to m6A-containing pri-miRNAs promotes pri-miRNA processing by enhancing binding of DGCR8 to pri-miRNA transcripts. Involved in miRNA sorting into exosomes following sumoylation, possibly by binding (m6A)-containing pre-miRNAs. Acts as a regulator of efficiency of mRNA splicing, possibly by binding to m6A-containing pre-mRNAs. Plays a role in the splicing of pyruvate kinase PKM by binding repressively to sequences flanking PKM exon 9, inhibiting exon 9 inclusion and resulting in exon 10 inclusion and production of the PKM M2 isoform. This chain is Heterogeneous nuclear ribonucleoproteins A2/B1 (HNRNPA2B1), found in Bos taurus (Bovine).